The chain runs to 37 residues: ECATKNKRCADWAGPWCCDGLYCSCRSYPGCMCRPSS.

Intrachain disulfides connect Cys-2-Cys-18, Cys-9-Cys-23, Cys-17-Cys-33, and Cys-25-Cys-31. Ser-37 carries the serine amide modification.

The protein belongs to the neurotoxin 07 (Beta/delta-agtx) family. 01 (aga-2) subfamily. Expressed by the venom gland.

It localises to the secreted. Insecticidal neurotoxin that induces an irreversible spastic paralysis when injected into insects. Modifies presynaptic voltage-gated sodium channels (Nav), causing them to open at the normal resting potential of the nerve. This leads to spontaneous release of neurotransmitter and repetitive action potentials in motor neurons. This is Mu-agatoxin-Aa1b from Agelenopsis aperta (North American funnel-web spider).